The chain runs to 275 residues: Probable histone chaperone asf-1 (275 aa).

Composition is skewed to acidic residues over residues 157–166, 183–207, and 230–247; these read EDPVAEPVED, DGQEDDDEEEEDDDEMEANAEEVDL, and KMEDDGANEDVDMADDEP. Residues 157–275 are disordered; the sequence is EDPVAEPVED…SDKTNNEMVQ (119 aa). Over residues 265–275 the composition is skewed to basic and acidic residues; sequence LSDKTNNEMVQ.

Belongs to the ASF1 family. Interacts with histone H3 and histone H4.

Its subcellular location is the nucleus. In terms of biological role, histone chaperone that facilitates histone deposition and histone exchange and removal during nucleosome assembly and disassembly. The protein is Probable histone chaperone asf-1 of Caenorhabditis elegans.